The chain runs to 391 residues: Probable inactive allantoicase (391 aa).

It belongs to the allantoicase family.

Its function is as follows. The function of this enzyme is unclear as allantoicase activity is not known to exist in mammals. The protein is Probable inactive allantoicase of Homo sapiens (Human).